Here is a 329-residue protein sequence, read N- to C-terminus: Bile salt hydrolase/transferase (329 aa).

The Nucleophile; acyl-thioester intermediate role is filled by C2. Deoxycholate-binding residues include C2 and R18. N82 provides a ligand contact to taurine.

It belongs to the peptidase C59 family. In terms of assembly, homotetramer. The tetramer consists of a dimer of dimers.

The catalysed reaction is glycocholate + H2O = cholate + glycine. It catalyses the reaction cholate + taurine = taurocholate + H2O. The enzyme catalyses taurodeoxycholate + H2O = deoxycholate + taurine. It carries out the reaction glycodeoxycholate + H2O = deoxycholate + glycine. The catalysed reaction is chenodeoxycholate + glycine = glycochenodeoxycholate + H2O. It catalyses the reaction taurochenodeoxycholate + H2O = chenodeoxycholate + taurine. The enzyme catalyses an L-alpha-amino acid + cholate = an N-choloyl-L-alpha-amino acid + H2O. It carries out the reaction an L-alpha-amino acid + taurocholate = an N-choloyl-L-alpha-amino acid + taurine. The catalysed reaction is glycocholate + an L-alpha-amino acid = an N-choloyl-L-alpha-amino acid + glycine. It catalyses the reaction cholate + L-histidine = L-histidocholate + H2O. The enzyme catalyses taurocholate + L-histidine = L-histidocholate + taurine. It carries out the reaction glycocholate + L-histidine = L-histidocholate + glycine. The catalysed reaction is cholate + L-arginine = L-arginocholate + H2O. It catalyses the reaction taurocholate + L-arginine = L-arginocholate + taurine. The enzyme catalyses glycocholate + L-arginine = L-arginocholate + glycine. It carries out the reaction cholate + L-phenylalanine = L-phenylalanocholate + H2O. The catalysed reaction is taurocholate + L-phenylalanine = L-phenylalanocholate + taurine. The protein operates within lipid metabolism; bile acid biosynthesis. Its function is as follows. Possesses dual functions in bile acid metabolism. Acts as a bile salt hydrolase that catalyzes the deconjugation of glycine- and taurine-linked bile salts, which occurs naturally in the intestines of humans, releasing amino acid residues and deconjugated bile salts (bile acids). Can hydrolyze the amide bond in major human conjugated bile salts, such as glycocholate (GCA), taurocholate (TCA) and taurodeoxycholate (TDCA). Shows a slight preference for taurine-conjugated bile acids as substrates. Also acts as an amine N-acyltransferase that conjugates a wide variety of amino acids to conjugated and non-conjugated bile acids, thus producing bacterial bile acid amidates (BBAAs) - also named microbially conjugated bile acids (MCBAs) - in the gastrointestinal tract. These BBAAs may facilitate communication between the microbiota and host through the activation of human ligand-activated transcription factors. This is Bile salt hydrolase/transferase (cbh) from Clostridium perfringens (strain 13 / Type A).